Here is a 1341-residue protein sequence, read N- to C-terminus: Subtilisin-like protease 2 (1341 aa).

A signal peptide spans 1-18 (MLNIIYVVSLILIKFIFY). Positions 19-686 (KECNNNNNYY…KLYNNKYSFL (668 aa)) are cleaved as a propeptide — inhibition peptide. 2 disordered regions span residues 85–107 (EKKT…EKKK) and 143–171 (ADVS…NYKN). N165, N343, N449, N453, and N492 each carry an N-linked (GlcNAc...) asparagine glycan. The tract at residues 415 to 474 (KKSKKEKENTQQKGGNNPNVDINILNNNNNNNNNNNSNNNSNSMNDEEINYNNNNNNKES) is disordered. The span at 430 to 474 (NNPNVDINILNNNNNNNNNNNSNNNSNSMNDEEINYNNNNNNKES) shows a compositional bias: low complexity. A disordered region spans residues 499–530 (IYHNKNDNSYKNKKEGTGKNNDNNDPNNNNNK). A compositionally biased stretch (basic and acidic residues) spans 502 to 515 (NKNDNSYKNKKEGT). Over residues 517–530 (KNNDNNDPNNNNNK) the composition is skewed to low complexity. Residues N550, N641, and N728 are each glycosylated (N-linked (GlcNAc...) asparagine). The Extracellular segment spans residues 687–1136 (NKFLNIEPLI…LYNLYEYDSH (450 aa)). The Peptidase S8 domain occupies 726-1019 (TWNLSIIRVF…DSLVNAEGAV (294 aa)). Catalysis depends on charge relay system residues D754 and H797. Residues N820, N856, N892, and N950 are each glycosylated (N-linked (GlcNAc...) asparagine). The active-site Charge relay system is the S960. Residues N1009 and N1105 are each glycosylated (N-linked (GlcNAc...) asparagine). The helical transmembrane segment at 1137–1157 (YLLASVILFFLALLSIFVGMI) threads the bilayer. At 1158 to 1341 (YMKSRKHSDK…MNQLDDMFMK (184 aa)) the chain is on the cytoplasmic side.

It belongs to the peptidase S8 family. Post-translationally, proteolytically cleaved at the N-terminus to generate a 74kDa intermediate which is further processed into a 72kDa form. The first maturation cleavage is autocatalytic, occurs in the ER and is necessary for the subsequent SUB2 trafficking to the microneme. The second cleavage may be mediated by PMX/plasmepsin X.

It is found in the cell membrane. The protein localises to the cytoplasmic vesicle. The protein resides in the secretory vesicle. Its subcellular location is the microneme membrane. The catalysed reaction is Hydrolysis of proteins with broad specificity for peptide bonds, and a preference for a large uncharged residue in P1. Hydrolyzes peptide amides.. Its activity is regulated as follows. Activation may be calcium-dependent. Inhibited by the non-covalent interaction with the cleaved propeptide. Serine protease which plays an essential role in the shedding of AMA1, MSP1 and MSP7 from the surface of the invading merozoite; this step is essential for productive invasion and the release of the adhesion between the erythrocyte and the merozoite. May cleave TRAMP/PTTRAMP, thereby shedding TRAMP from the merozoite surface during erythrocyte invasion. The polypeptide is Subtilisin-like protease 2 (Plasmodium falciparum (isolate 3D7)).